The sequence spans 98 residues: NADH-ubiquinone oxidoreductase chain 4L (98 aa).

Helical transmembrane passes span 1–21 (MSLT…GLLL), 29–49 (SLLC…MTIL), and 61–81 (IILL…LVMV).

The protein belongs to the complex I subunit 4L family. As to quaternary structure, core subunit of respiratory chain NADH dehydrogenase (Complex I) which is composed of 45 different subunits.

Its subcellular location is the mitochondrion inner membrane. The catalysed reaction is a ubiquinone + NADH + 5 H(+)(in) = a ubiquinol + NAD(+) + 4 H(+)(out). Functionally, core subunit of the mitochondrial membrane respiratory chain NADH dehydrogenase (Complex I) which catalyzes electron transfer from NADH through the respiratory chain, using ubiquinone as an electron acceptor. Part of the enzyme membrane arm which is embedded in the lipid bilayer and involved in proton translocation. The chain is NADH-ubiquinone oxidoreductase chain 4L (MT-ND4L) from Vampyrodes caraccioli (Great stripe-faced bat).